We begin with the raw amino-acid sequence, 232 residues long: Ion-translocating oxidoreductase complex subunit E (232 aa).

A run of 6 helical transmembrane segments spans residues 12–31 (LWRN…LLAV), 39–59 (LGLG…VSAL), 69–89 (IPIY…LINA), 92–112 (FGLY…CIVI), 125–145 (ALAA…LLLL), and 182–202 (PFLL…MLVG).

The protein belongs to the NqrDE/RnfAE family. In terms of assembly, the complex is composed of six subunits: RnfA, RnfB, RnfC, RnfD, RnfE and RnfG.

It localises to the cell inner membrane. Part of a membrane-bound complex that couples electron transfer with translocation of ions across the membrane. The chain is Ion-translocating oxidoreductase complex subunit E from Sodalis glossinidius (strain morsitans).